The primary structure comprises 359 residues: Protein-arginine kinase (359 aa).

Residues 25 to 257 form the Phosphagen kinase C-terminal domain; that stretch reads IVISSRVRLA…QQVIEQERML (233 aa). ATP contacts are provided by residues 28-32, His-93, Arg-128, 179-183, and 210-215; these read SSRVR, RASLM, and RGIYGE. An RDXXRA motif of the pArg binding pocket involved in allosteric regulation motif is present at residues 340–345; it reads RDAKRA.

It belongs to the ATP:guanido phosphotransferase family.

The enzyme catalyses L-arginyl-[protein] + ATP = N(omega)-phospho-L-arginyl-[protein] + ADP + H(+). With respect to regulation, appears to be allosterically activated by the binding of pArg-containing polypeptides to the pArg-binding pocket localized in the C-terminal domain of McsB. In terms of biological role, catalyzes the specific phosphorylation of arginine residues in proteins. This Syntrophomonas wolfei subsp. wolfei (strain DSM 2245B / Goettingen) protein is Protein-arginine kinase.